Consider the following 531-residue polypeptide: Peptide chain release factor 3 (531 aa).

One can recognise a tr-type G domain in the interval 11–280 (GRRRTFAIIS…AFIRFASRPG (270 aa)). GTP contacts are provided by residues 20 to 27 (SHPDAGKT), 88 to 92 (DTPGH), and 142 to 145 (NKLD).

It belongs to the TRAFAC class translation factor GTPase superfamily. Classic translation factor GTPase family. PrfC subfamily.

The protein resides in the cytoplasm. In terms of biological role, increases the formation of ribosomal termination complexes and stimulates activities of RF-1 and RF-2. It binds guanine nucleotides and has strong preference for UGA stop codons. It may interact directly with the ribosome. The stimulation of RF-1 and RF-2 is significantly reduced by GTP and GDP, but not by GMP. This Gloeobacter violaceus (strain ATCC 29082 / PCC 7421) protein is Peptide chain release factor 3.